We begin with the raw amino-acid sequence, 126 residues long: Glycine cleavage system H protein (126 aa).

The region spanning 22 to 104 is the Lipoyl-binding domain; the sequence is VAYVGITDYA…YGKGWLIKIS (83 aa). Lys63 carries the post-translational modification N6-lipoyllysine.

This sequence belongs to the GcvH family. As to quaternary structure, the glycine cleavage system is composed of four proteins: P, T, L and H. Requires (R)-lipoate as cofactor.

Its function is as follows. The glycine cleavage system catalyzes the degradation of glycine. The H protein shuttles the methylamine group of glycine from the P protein to the T protein. This Parabacteroides distasonis (strain ATCC 8503 / DSM 20701 / CIP 104284 / JCM 5825 / NCTC 11152) protein is Glycine cleavage system H protein.